A 293-amino-acid chain; its full sequence is 4-diphosphocytidyl-2-C-methyl-D-erythritol kinase (293 aa).

Lys16 is an active-site residue. 99–109 contacts ATP; it reads PMGAGLGGGSS. Asp141 is a catalytic residue.

The protein belongs to the GHMP kinase family. IspE subfamily.

The enzyme catalyses 4-CDP-2-C-methyl-D-erythritol + ATP = 4-CDP-2-C-methyl-D-erythritol 2-phosphate + ADP + H(+). It participates in isoprenoid biosynthesis; isopentenyl diphosphate biosynthesis via DXP pathway; isopentenyl diphosphate from 1-deoxy-D-xylulose 5-phosphate: step 3/6. Catalyzes the phosphorylation of the position 2 hydroxy group of 4-diphosphocytidyl-2C-methyl-D-erythritol. In Burkholderia cenocepacia (strain ATCC BAA-245 / DSM 16553 / LMG 16656 / NCTC 13227 / J2315 / CF5610) (Burkholderia cepacia (strain J2315)), this protein is 4-diphosphocytidyl-2-C-methyl-D-erythritol kinase.